The chain runs to 102 residues: Small ribosomal subunit protein uS10 (102 aa).

It belongs to the universal ribosomal protein uS10 family. As to quaternary structure, part of the 30S ribosomal subunit.

Involved in the binding of tRNA to the ribosomes. This is Small ribosomal subunit protein uS10 from Malacoplasma penetrans (strain HF-2) (Mycoplasma penetrans).